Here is a 587-residue protein sequence, read N- to C-terminus: uncharacterized protein (587 aa).

Residues 61–426 (GKGASKKAAL…DLPNWHHDAE (366 aa)) form the YcaO domain.

This is an uncharacterized protein from Haemophilus influenzae (strain ATCC 51907 / DSM 11121 / KW20 / Rd).